The sequence spans 459 residues: Nuclear distribution protein nudF 1 (459 aa).

The 33-residue stretch at 9-41 (QAEELHKSIIAYLSANNLSNAASALRGELGLSE) folds into the LisH domain. Residues 61-88 (TSIVRLQKKIMDLEARCGALQTELNNAT) are a coiled coil. WD repeat units lie at residues 114–155 (SHRN…TTLK), 157–197 (HTRA…KNIR), 201–240 (GHEHSVSAVRFIPGRNLLTSASRDKDLRIWDVTTGFCVKT), 243–282 (GHSGWVRDVCPSFDGNYLFSAGDDVTARLWDITNISNPEA), 288–349 (GHDH…LMTL), 351–390 (GHDNWVRAIVFHPGGKYLLSASDDKSIRCWDLSQDGKCVK), 395–440 (AHGR…PQVQ), and 442–459 (RCVVASGGVDQKLNIFAN).

Belongs to the WD repeat LIS1/nudF family. As to quaternary structure, self-associates. Interacts with nudE and dynein.

Its subcellular location is the cytoplasm. The protein localises to the cytoskeleton. It localises to the spindle pole. Its function is as follows. Positively regulates the activity of the minus-end directed microtubule motor protein dynein. May enhance dynein-mediated microtubule sliding by targeting dynein to the microtubule plus end. Required for nuclear migration during vegetative growth as well as development. Required for retrograde early endosome (EE) transport from the hyphal tip. Required for localization of dynein to the mitotic spindle poles. Recruits additional proteins to the dynein complex at SPBs. This is Nuclear distribution protein nudF 1 from Talaromyces marneffei (strain ATCC 18224 / CBS 334.59 / QM 7333) (Penicillium marneffei).